A 207-amino-acid polypeptide reads, in one-letter code: Small ribosomal subunit protein uS4 (207 aa).

The disordered stretch occupies residues 31–55; sequence KCKLDSKPGQHGRTSGARTSDYGTQ. Residues 42–53 show a composition bias toward polar residues; the sequence is GRTSGARTSDYG. Residues 97 to 160 form the S4 RNA-binding domain; the sequence is SRLDNVVYRM…KKQARIVEAL (64 aa).

It belongs to the universal ribosomal protein uS4 family. In terms of assembly, part of the 30S ribosomal subunit. Contacts protein S5. The interaction surface between S4 and S5 is involved in control of translational fidelity.

In terms of biological role, one of the primary rRNA binding proteins, it binds directly to 16S rRNA where it nucleates assembly of the body of the 30S subunit. Functionally, with S5 and S12 plays an important role in translational accuracy. The chain is Small ribosomal subunit protein uS4 from Burkholderia thailandensis (strain ATCC 700388 / DSM 13276 / CCUG 48851 / CIP 106301 / E264).